Reading from the N-terminus, the 357-residue chain is NADPH HC-toxin reductase 1 (357 aa).

NADP(+) is bound by residues Arg40, Lys47, Asp68–Leu69, Val88–Thr90, Tyr178, Lys182, Leu207–Val210, and Thr222. The Proton donor role is filled by Lys182.

The protein belongs to the NAD(P)-dependent epimerase/dehydratase family.

With respect to regulation, activity is sensitive to heat, dependent on NADPH, and inhibited by p-hydroxymercuribenzoate and disulfiram. In terms of biological role, in tandem with Hm2, NADPH-dependent Helminthosporium carbonum (HC) toxin reductase (HCTR), which inactivates HC toxin, a cyclic tetrapeptide produced by the fungus Cochliobolus carbonum to permit infection and acting as an inhibitor of host histone deacetylases (HDACs), thus conferring resistance against C.carbonum race 1 in resistant cultivars (e.g. cv. B73 and cv. Wisconsin 22). Catalyzes the production of 8-hydroxy derivative of HC-toxin via the reduction of the 8-keto group of 2-amino-9,10-epoxy-8-oxo-decanoic acid, an amino acid of the HC-toxin. In Zea mays (Maize), this protein is NADPH HC-toxin reductase 1.